A 306-amino-acid polypeptide reads, in one-letter code: tRNA pseudouridine synthase B (306 aa).

The Nucleophile role is filled by Asp-38.

It belongs to the pseudouridine synthase TruB family. Type 1 subfamily.

It catalyses the reaction uridine(55) in tRNA = pseudouridine(55) in tRNA. Functionally, responsible for synthesis of pseudouridine from uracil-55 in the psi GC loop of transfer RNAs. In Syntrophotalea carbinolica (strain DSM 2380 / NBRC 103641 / GraBd1) (Pelobacter carbinolicus), this protein is tRNA pseudouridine synthase B.